We begin with the raw amino-acid sequence, 350 residues long: Phenylalanine--tRNA ligase alpha subunit (350 aa).

Glu-260 is a Mg(2+) binding site.

Belongs to the class-II aminoacyl-tRNA synthetase family. Phe-tRNA synthetase alpha subunit type 1 subfamily. Tetramer of two alpha and two beta subunits. Requires Mg(2+) as cofactor.

It is found in the cytoplasm. The enzyme catalyses tRNA(Phe) + L-phenylalanine + ATP = L-phenylalanyl-tRNA(Phe) + AMP + diphosphate + H(+). This chain is Phenylalanine--tRNA ligase alpha subunit, found in Mycoplasma capricolum subsp. capricolum (strain California kid / ATCC 27343 / NCTC 10154).